We begin with the raw amino-acid sequence, 630 residues long: Arginine--tRNA ligase (630 aa).

The 'HIGH' region motif lies at 120–130; that stretch reads ANPIHPLHIGH.

Belongs to the class-I aminoacyl-tRNA synthetase family.

It is found in the cytoplasm. The enzyme catalyses tRNA(Arg) + L-arginine + ATP = L-arginyl-tRNA(Arg) + AMP + diphosphate. The polypeptide is Arginine--tRNA ligase (Pyrobaculum arsenaticum (strain DSM 13514 / JCM 11321 / PZ6)).